We begin with the raw amino-acid sequence, 347 residues long: Methylthioribose-1-phosphate isomerase (347 aa).

Substrate is bound by residues 47-49 (RGA), Arg90, and Gln199. Catalysis depends on Asp240, which acts as the Proton donor. Substrate is bound at residue 250–251 (NK).

Belongs to the eIF-2B alpha/beta/delta subunits family. MtnA subfamily.

The catalysed reaction is 5-(methylsulfanyl)-alpha-D-ribose 1-phosphate = 5-(methylsulfanyl)-D-ribulose 1-phosphate. It functions in the pathway amino-acid biosynthesis; L-methionine biosynthesis via salvage pathway; L-methionine from S-methyl-5-thio-alpha-D-ribose 1-phosphate: step 1/6. Functionally, catalyzes the interconversion of methylthioribose-1-phosphate (MTR-1-P) into methylthioribulose-1-phosphate (MTRu-1-P). This Natranaerobius thermophilus (strain ATCC BAA-1301 / DSM 18059 / JW/NM-WN-LF) protein is Methylthioribose-1-phosphate isomerase.